We begin with the raw amino-acid sequence, 388 residues long: Chorismate synthase (388 aa).

NADP(+)-binding residues include Arg-39 and Arg-45. FMN is bound by residues 132 to 134, 251 to 252, Gly-296, 311 to 315, and Arg-337; these read RSS, NA, and KPIPT.

Belongs to the chorismate synthase family. As to quaternary structure, homotetramer. Requires FMNH2 as cofactor.

It catalyses the reaction 5-O-(1-carboxyvinyl)-3-phosphoshikimate = chorismate + phosphate. It functions in the pathway metabolic intermediate biosynthesis; chorismate biosynthesis; chorismate from D-erythrose 4-phosphate and phosphoenolpyruvate: step 7/7. Its function is as follows. Catalyzes the anti-1,4-elimination of the C-3 phosphate and the C-6 proR hydrogen from 5-enolpyruvylshikimate-3-phosphate (EPSP) to yield chorismate, which is the branch point compound that serves as the starting substrate for the three terminal pathways of aromatic amino acid biosynthesis. This reaction introduces a second double bond into the aromatic ring system. The polypeptide is Chorismate synthase (Staphylococcus epidermidis (strain ATCC 35984 / DSM 28319 / BCRC 17069 / CCUG 31568 / BM 3577 / RP62A)).